Consider the following 48-residue polypeptide: Large ribosomal subunit protein eL40 (48 aa).

This sequence belongs to the eukaryotic ribosomal protein eL40 family.

This Methanosphaera stadtmanae (strain ATCC 43021 / DSM 3091 / JCM 11832 / MCB-3) protein is Large ribosomal subunit protein eL40.